We begin with the raw amino-acid sequence, 748 residues long: Rho GTPase-activating protein 24 (748 aa).

Residues 1-20 (MEENNDSTENPQQGQGRQNA) are disordered. The segment covering 7–18 (STENPQQGQGRQ) has biased composition (polar residues). Positions 19–125 (NAIKCGWLRK…WVKSIRRVIW (107 aa)) constitute a PH domain. In terms of domain architecture, Rho-GAP spans 135-329 (QKLEDTVRYE…VMISKHDCLF (195 aa)). 2 disordered regions span residues 354-476 (TMGQ…GTHS) and 582-641 (DFFG…SSNH). Polar residues-rich tracts occupy residues 356–374 (GQLQ…SRQC) and 382–405 (PQRS…SPKN). Phosphoserine occurs at positions 369, 391, 396, 398, 402, 413, 415, and 437. A compositionally biased stretch (polar residues) spans 432-476 (IVTNGSFSSSNAEGLEKTQTTPNGSLQARRSSSLKVSGTKMGTHS). Thr-452 carries the post-translational modification Phosphothreonine. Residues 600–615 (DLSHPRDYESKSDHRS) are compositionally biased toward basic and acidic residues. Low complexity predominate over residues 617-641 (GGRSSRATSSSDNSETFVGNSSSNH). A coiled-coil region spans residues 649–729 (SSLKQEMTKQ…KEMEQFFSTF (81 aa)).

As to quaternary structure, interacts with FLNA. Phosphorylated by ROCK, leading to activate the RacGAP activity. As to expression, isoform 1 is widely expressed with a higher level in kidney. Isoform 2 is mainly expressed in endothelial cells.

It localises to the cytoplasm. It is found in the cytoskeleton. The protein localises to the cell junction. Its subcellular location is the adherens junction. The protein resides in the focal adhesion. It localises to the cell projection. Rho GTPase-activating protein involved in cell polarity, cell morphology and cytoskeletal organization. Acts as a GTPase activator for the Rac-type GTPase by converting it to an inactive GDP-bound state. Controls actin remodeling by inactivating Rac downstream of Rho leading to suppress leading edge protrusion and promotes cell retraction to achieve cellular polarity. Able to suppress RAC1 and CDC42 activity in vitro. Overexpression induces cell rounding with partial or complete disruption of actin stress fibers and formation of membrane ruffles, lamellipodia, and filopodia. Isoform 2 is a vascular cell-specific GAP involved in modulation of angiogenesis. The chain is Rho GTPase-activating protein 24 (ARHGAP24) from Homo sapiens (Human).